Here is an 893-residue protein sequence, read N- to C-terminus: NEDD4-binding protein 1 (893 aa).

The region spanning 59–143 is the KH-like domain; the sequence is QEAVHSAKEY…IQQFVKLFES (85 aa). A disordered region spans residues 213 to 243; that stretch reads EYTQSAATGPSSARDEVVVQEDSRNKARTPV. The span at 214-223 shows a compositional bias: polar residues; sequence YTQSAATGPS. The span at 225-237 shows a compositional bias: basic and acidic residues; the sequence is ARDEVVVQEDSRN. Thr241 bears the Phosphothreonine mark. Phosphoserine occurs at positions 257, 269, and 299. Disordered regions lie at residues 273–339, 394–433, and 472–564; these read DALS…DGKD, RDFP…QSHT, and IWGS…PPLP. Polar residues-rich tracts occupy residues 405 to 433 and 523 to 537; these read ASQS…QSHT and GFQQ…NNTK. A compositionally biased stretch (pro residues) spans 551 to 564; the sequence is QPKPNYPPLSPPLP. Ser560 bears the Phosphoserine mark. Residues 615 to 767 enclose the RNase NYN domain; it reads LKHIVIDGSN…LGRNGPRLEE (153 aa). The disordered stretch occupies residues 793-820; sequence PGFRSPSTQVANNSHQPPPRIQTSSSPW. Polar residues predominate over residues 797-820; that stretch reads SPSTQVANNSHQPPPRIQTSSSPW. Residues 846–893 form a coCUN region; sequence RSSAETSELREALLKIFPDSEQKLKIDQILAAHPYMKDLNALSALVLD.

Belongs to the N4BP1 family. In terms of assembly, interacts with NEDD4. Interacts with ITCH (via WW domain 2). Post-translationally, proteolytically cleaved by CASP8 downstream of TLR3 or TLR4, leading to its inactivation. Mainly cleaved at Asp-488 by CASP8. Cleaved by caspase-like protein MALT1, leading to its inactivation. Mono- and polyubiquitinated on the CoCUN region. Monoubiquitinated by NEDD4. Polyubiquitinated, leading to its degradation by the proteasome. Sumoylated with SUMO1, abrogating polyubiquitination and subsequent degradation. Desumoylated by SENP1, leading to accumulation in PML nuclear bodies.

Its subcellular location is the cytoplasm. It localises to the cytosol. The protein localises to the nucleus. It is found in the nucleolus. The protein resides in the PML body. Its activity is regulated as follows. Proteolytic cleavage by CASP8 or MALT1 leads to its inactivation. In terms of biological role, potent suppressor of cytokine production that acts as a regulator of innate immune signaling and inflammation. Acts as a key negative regulator of select cytokine and chemokine responses elicited by TRIF-independent Toll-like receptors (TLRs), thereby limiting inflammatory cytokine responses to minor insults. In response to more threatening pathogens, cleaved by CASP8 downstream of TLR3 or TLR4, leading to its inactivation, thereby allowing production of inflammatory cytokines. Acts as a restriction factor against some viruses: restricts viral replication by binding to mRNA viruses and mediating their degradation via its ribonuclease activity. Also acts as an inhibitor of the E3 ubiquitin-protein ligase ITCH: acts by interacting with the second WW domain of ITCH, leading to compete with ITCH's substrates and impairing ubiquitination of substrates. The chain is NEDD4-binding protein 1 from Mus musculus (Mouse).